The sequence spans 252 residues: 2-succinyl-6-hydroxy-2,4-cyclohexadiene-1-carboxylate synthase (252 aa).

This sequence belongs to the AB hydrolase superfamily. MenH family. Monomer.

The enzyme catalyses 5-enolpyruvoyl-6-hydroxy-2-succinyl-cyclohex-3-ene-1-carboxylate = (1R,6R)-6-hydroxy-2-succinyl-cyclohexa-2,4-diene-1-carboxylate + pyruvate. The protein operates within quinol/quinone metabolism; 1,4-dihydroxy-2-naphthoate biosynthesis; 1,4-dihydroxy-2-naphthoate from chorismate: step 3/7. Its pathway is quinol/quinone metabolism; menaquinone biosynthesis. In terms of biological role, catalyzes a proton abstraction reaction that results in 2,5-elimination of pyruvate from 2-succinyl-5-enolpyruvyl-6-hydroxy-3-cyclohexene-1-carboxylate (SEPHCHC) and the formation of 2-succinyl-6-hydroxy-2,4-cyclohexadiene-1-carboxylate (SHCHC). This chain is 2-succinyl-6-hydroxy-2,4-cyclohexadiene-1-carboxylate synthase, found in Escherichia coli (strain SMS-3-5 / SECEC).